A 232-amino-acid chain; its full sequence is Orotidine 5'-phosphate decarboxylase (232 aa).

Residues aspartate 13, lysine 35, 62 to 71 (DLKFHDIPNT), threonine 122, arginine 182, glutamine 191, glycine 211, and arginine 212 each bind substrate. Lysine 64 (proton donor) is an active-site residue.

This sequence belongs to the OMP decarboxylase family. Type 1 subfamily. As to quaternary structure, homodimer.

It carries out the reaction orotidine 5'-phosphate + H(+) = UMP + CO2. It functions in the pathway pyrimidine metabolism; UMP biosynthesis via de novo pathway; UMP from orotate: step 2/2. Its function is as follows. Catalyzes the decarboxylation of orotidine 5'-monophosphate (OMP) to uridine 5'-monophosphate (UMP). The polypeptide is Orotidine 5'-phosphate decarboxylase (Pseudomonas syringae pv. syringae (strain B728a)).